The following is a 791-amino-acid chain: Putative inactive tyrosine-protein kinase Wsck (791 aa).

An N-terminal signal peptide occupies residues 1-26 (MECGSHSGHRPIPIWLSSCLVAMCLG). Over 27-401 (LPLGAAVPQE…YATFEKGQSS (375 aa)) the chain is Extracellular. A WSC domain is found at 39 to 125 (AYYYVGCYTA…VGVHSYYSTI (87 aa)). Positions 131–246 (GPHHLRISNK…ASIEATTEVG (116 aa)) constitute a Fibronectin type-III domain. Residues Asn-139, Asn-217, and Asn-329 are each glycosylated (N-linked (GlcNAc...) asparagine). A helical membrane pass occupies residues 402–422 (VVALAVTCVIFGSCLLLSLIA). Topologically, residues 423 to 791 (YFYLRYKTCR…PQLEAVATMG (369 aa)) are cytoplasmic. Residues 493–758 (LNVNDVIGDG…DVAFGVRQLM (266 aa)) form the Protein kinase domain. 499–507 (IGDGRFGEI) is a binding site for ATP.

It belongs to the protein kinase superfamily. Tyr protein kinase family.

The protein resides in the membrane. Probably lacks tyrosine-protein kinase activity. This is Putative inactive tyrosine-protein kinase Wsck from Drosophila melanogaster (Fruit fly).